A 426-amino-acid chain; its full sequence is Phosphoribosylamine--glycine ligase (426 aa).

Residues 107–313 form the ATP-grasp domain; sequence KDFMQKYGVK…FLNVINSALN (207 aa). 133–194 contributes to the ATP binding site; sequence LDKISYPVVI…EEFLDGVEIS (62 aa). The Mg(2+) site is built by glutamate 283 and asparagine 285.

Belongs to the GARS family. Requires Mg(2+) as cofactor. Mn(2+) is required as a cofactor.

The catalysed reaction is 5-phospho-beta-D-ribosylamine + glycine + ATP = N(1)-(5-phospho-beta-D-ribosyl)glycinamide + ADP + phosphate + H(+). The protein operates within purine metabolism; IMP biosynthesis via de novo pathway; N(1)-(5-phospho-D-ribosyl)glycinamide from 5-phospho-alpha-D-ribose 1-diphosphate: step 2/2. The chain is Phosphoribosylamine--glycine ligase from Fusobacterium nucleatum subsp. nucleatum (strain ATCC 25586 / DSM 15643 / BCRC 10681 / CIP 101130 / JCM 8532 / KCTC 2640 / LMG 13131 / VPI 4355).